The following is a 449-amino-acid chain: Bifunctional F420 biosynthesis protein FbiB (449 aa).

The tract at residues 1–245 (MSPAGEHGTA…PGTEDLFWLG (245 aa)) is coenzyme F420:L-glutamate ligase. Residues 21–24 (LPEF), S51, and K56 each bind GTP. An a divalent metal cation-binding site is contributed by D110. Position 113 (N113) interacts with GTP. Residues D151 and T152 each contribute to the a divalent metal cation site. The dehydro-coenzyme F420-0 reductase stretch occupies residues 246–449 (TAEAIELGRR…ADPGDLLIRK (204 aa)). Residues 261-265 (RRSVR) and A289 each bind FMN. Residue D321 participates in coenzyme F420-(gamma-Glu)n binding. Residues G400 and R437 each coordinate FMN.

This sequence in the N-terminal section; belongs to the CofE family. It depends on Mg(2+) as a cofactor. Mn(2+) serves as cofactor. The cofactor is K(+).

The catalysed reaction is oxidized coenzyme F420-0 + GTP + L-glutamate = oxidized coenzyme F420-1 + GDP + phosphate + H(+). It carries out the reaction oxidized coenzyme F420-1 + GTP + L-glutamate = oxidized coenzyme F420-2 + GDP + phosphate + H(+). It catalyses the reaction oxidized coenzyme F420-(gamma-L-Glu)(n) + GTP + L-glutamate = oxidized coenzyme F420-(gamma-L-Glu)(n+1) + GDP + phosphate + H(+). The enzyme catalyses oxidized coenzyme F420-0 + FMN + H(+) = dehydro coenzyme F420-0 + FMNH2. It participates in cofactor biosynthesis; coenzyme F420 biosynthesis. Functionally, bifunctional enzyme that catalyzes the GTP-dependent successive addition of multiple gamma-linked L-glutamates to the L-lactyl phosphodiester of 7,8-didemethyl-8-hydroxy-5-deazariboflavin (F420-0) to form polyglutamated F420 derivatives, and the FMNH2-dependent reduction of dehydro-F420-0 to form F420-0. The protein is Bifunctional F420 biosynthesis protein FbiB of Mycobacterium avium (strain 104).